We begin with the raw amino-acid sequence, 395 residues long: Chorismate synthase (395 aa).

R48 is an NADP(+) binding site. 125–127 (RSS) serves as a coordination point for FMN. Positions 264 to 292 (RNEDWTFDDGESFDHVESEEGDPVPVGND) are disordered. Residues G298, 313–317 (HAPTS), and R340 contribute to the FMN site. The disordered stretch occupies residues 373–395 (PDRVDGNPGQYDTDYHPSSPDND).

This sequence belongs to the chorismate synthase family. Requires FMNH2 as cofactor.

It carries out the reaction 5-O-(1-carboxyvinyl)-3-phosphoshikimate = chorismate + phosphate. Its pathway is metabolic intermediate biosynthesis; chorismate biosynthesis; chorismate from D-erythrose 4-phosphate and phosphoenolpyruvate: step 7/7. Its function is as follows. Catalyzes the anti-1,4-elimination of the C-3 phosphate and the C-6 proR hydrogen from 5-enolpyruvylshikimate-3-phosphate (EPSP) to yield chorismate, which is the branch point compound that serves as the starting substrate for the three terminal pathways of aromatic amino acid biosynthesis. This reaction introduces a second double bond into the aromatic ring system. The polypeptide is Chorismate synthase (Halorubrum lacusprofundi (strain ATCC 49239 / DSM 5036 / JCM 8891 / ACAM 34)).